A 104-amino-acid chain; its full sequence is Large ribosomal subunit protein uL24 (104 aa).

The protein belongs to the universal ribosomal protein uL24 family. Part of the 50S ribosomal subunit.

Its function is as follows. One of two assembly initiator proteins, it binds directly to the 5'-end of the 23S rRNA, where it nucleates assembly of the 50S subunit. One of the proteins that surrounds the polypeptide exit tunnel on the outside of the subunit. In Shewanella loihica (strain ATCC BAA-1088 / PV-4), this protein is Large ribosomal subunit protein uL24.